The following is a 222-amino-acid chain: Ubiquitin-conjugating enzyme E2 S (222 aa).

N-acetylmethionine is present on Met1. Positions 11–157 (HIIRLVYKEV…ARLLTEIHGG (147 aa)) constitute a UBC core domain. Cys95 functions as the Glycyl thioester intermediate in the catalytic mechanism. The segment at 156–222 (GGAGGPSGRA…TDKKRALRRL (67 aa)) is disordered. A Phosphoserine modification is found at Ser173. A compositionally biased stretch (basic residues) spans 208–222 (AAKKKTDKKRALRRL).

It belongs to the ubiquitin-conjugating enzyme family. Component of the APC/C complex, composed of at least 14 distinct subunits that assemble into a complex of at least 19 chains with a combined molecular mass of around 1.2 MDa. Within this complex, directly interacts with ANAPC2 and ANAPC4. Interacts with CDC20, FZR1/CDH1 and VHL. Autoubiquitinated by the APC/C complex during G1, leading to its degradation by the proteasome.

The catalysed reaction is S-ubiquitinyl-[E1 ubiquitin-activating enzyme]-L-cysteine + [E2 ubiquitin-conjugating enzyme]-L-cysteine = [E1 ubiquitin-activating enzyme]-L-cysteine + S-ubiquitinyl-[E2 ubiquitin-conjugating enzyme]-L-cysteine.. It functions in the pathway protein modification; protein ubiquitination. Functionally, accepts ubiquitin from the E1 complex and catalyzes its covalent attachment to other proteins. Catalyzes 'Lys-11'-linked polyubiquitination. Acts as an essential factor of the anaphase promoting complex/cyclosome (APC/C), a cell cycle-regulated ubiquitin ligase that controls progression through mitosis. Acts by specifically elongating 'Lys-11'-linked polyubiquitin chains initiated by the E2 enzyme UBE2C/UBCH10 on APC/C substrates, enhancing the degradation of APC/C substrates by the proteasome and promoting mitotic exit. Also acts by elongating ubiquitin chains initiated by the E2 enzyme UBE2D1/UBCH5 in vitro; it is however unclear whether UBE2D1/UBCH5 acts as an E2 enzyme for the APC/C in vivo. Also involved in ubiquitination and subsequent degradation of VHL, resulting in an accumulation of HIF1A. In vitro able to promote polyubiquitination using all 7 ubiquitin Lys residues, except 'Lys-48'-linked polyubiquitination. The protein is Ubiquitin-conjugating enzyme E2 S (UBE2S) of Homo sapiens (Human).